The sequence spans 45 residues: uncharacterized protein (45 aa).

The N-terminal stretch at 1-19 (MTFQILFLFVFHFVYIFRA) is a signal peptide.

This is an uncharacterized protein from Saccharomyces cerevisiae (strain ATCC 204508 / S288c) (Baker's yeast).